A 363-amino-acid chain; its full sequence is 3-isopropylmalate dehydrogenase (363 aa).

An NAD(+)-binding site is contributed by 78 to 91 (GPKWEHLPPDQQPE). Substrate contacts are provided by R99, R109, R138, and D227. Residues D227, D251, and D255 each contribute to the Mg(2+) site. 285–297 (GSAPDIAGKNIAN) contributes to the NAD(+) binding site.

This sequence belongs to the isocitrate and isopropylmalate dehydrogenases family. LeuB type 1 subfamily. In terms of assembly, homodimer. It depends on Mg(2+) as a cofactor. The cofactor is Mn(2+).

It is found in the cytoplasm. It carries out the reaction (2R,3S)-3-isopropylmalate + NAD(+) = 4-methyl-2-oxopentanoate + CO2 + NADH. Its pathway is amino-acid biosynthesis; L-leucine biosynthesis; L-leucine from 3-methyl-2-oxobutanoate: step 3/4. In terms of biological role, catalyzes the oxidation of 3-carboxy-2-hydroxy-4-methylpentanoate (3-isopropylmalate) to 3-carboxy-4-methyl-2-oxopentanoate. The product decarboxylates to 4-methyl-2 oxopentanoate. The chain is 3-isopropylmalate dehydrogenase from Shigella sonnei (strain Ss046).